Reading from the N-terminus, the 906-residue chain is UPF0182 protein CA_C0010 (906 aa).

The next 7 helical transmembrane spans lie at 7-29 (IVTIILFLLVIVGSFGKVTDFII), 47-69 (LAAILKLMIPIFIIIYTGLWFYY), 96-118 (VAIVIDVIASFFVAYFTSSVYWY), 153-175 (LYGVMLLFLIFMAVLTVILYIVL), 208-230 (FAIISGLIMFLVAVGYAIRSFNL), 250-272 (LVFYVIIIAAAIVSSVVIFTSII), and 279-301 (IFVSIVAILILIIGQSITAEIVQ). Low complexity predominate over residues 842 to 862 (NSSNNQSETRTETGGTSTDSS). Positions 842 to 875 (NSSNNQSETRTETGGTSTDSSNNKDKLKQAQDLY) are disordered.

This sequence belongs to the UPF0182 family.

It localises to the cell membrane. This is UPF0182 protein CA_C0010 from Clostridium acetobutylicum (strain ATCC 824 / DSM 792 / JCM 1419 / IAM 19013 / LMG 5710 / NBRC 13948 / NRRL B-527 / VKM B-1787 / 2291 / W).